We begin with the raw amino-acid sequence, 198 residues long: Translation machinery-associated protein 22 (198 aa).

In terms of domain architecture, SUI1 spans 99–170 (VIIKREARTK…EVETYIHSLL (72 aa)).

It belongs to the DENR family. In terms of assembly, interacts with the 40S ribosomal subunit.

The protein localises to the cytoplasm. This chain is Translation machinery-associated protein 22 (TMA22), found in Saccharomyces cerevisiae (strain YJM789) (Baker's yeast).